We begin with the raw amino-acid sequence, 139 residues long: Large ribosomal subunit protein uL24 (139 aa).

The disordered stretch occupies residues 1–25 (MKRNTNVSSSRRKSRKAHFTASSGE).

Belongs to the universal ribosomal protein uL24 family.

In Dictyostelium discoideum (Social amoeba), this protein is Large ribosomal subunit protein uL24 (rpl26).